The primary structure comprises 1580 residues: Transcriptional activator GLI3 (1580 aa).

At methionine 1 the chain carries N-acetylmethionine. Polar residues-rich tracts occupy residues 1 to 10 (MEAQSHSSTT) and 58 to 78 (ITMQ…PSTS). The segment at 1–79 (MEAQSHSSTT…KVSEEPSTSS (79 aa)) is disordered. Residue arginine 175 is modified to Omega-N-methylarginine. The tract at residues 368–475 (QSLGSAFGHS…DKDESKQEPE (108 aa)) is disordered. A compositionally biased stretch (polar residues) spans 401–427 (NPVQVSSGPSESSQNKPTSESAVSSTG). Residues lysine 438 and lysine 462 each participate in a glycyl lysine isopeptide (Lys-Gly) (interchain with G-Cter in SUMO2) cross-link. Residues 461 to 474 (VKEEGDKDESKQEP) show a composition bias toward basic and acidic residues. 5 consecutive C2H2-type zinc fingers follow at residues 480–505 (TNCH…NNDH), 513–540 (FVCR…MRRH), 546–570 (HKCT…LRSH), 576–601 (YVCE…NRTH), and 607–632 (YVCK…KTVH). Residues 620 to 728 (DPSSLRKHVK…PISNYSNSGL (109 aa)) form a disordered region. Over residues 632–648 (HGPEAHVTKKQRGDIHP) the composition is skewed to basic and acidic residues. Phosphoserine is present on serine 664. The span at 684–699 (SKREECLQVKTVKAEK) shows a compositional bias: basic and acidic residues. The span at 703-726 (SQPSPGGQSSCSSQQSPISNYSNS) shows a compositional bias: low complexity. The interval 745-845 (DETPIMDSTI…VDVTMLNMLN (101 aa)) is mediates interaction with DZIP1. Lysine 773 participates in a covalent cross-link: Glycyl lysine isopeptide (Lys-Gly) (interchain with G-Cter in ubiquitin). A Glycyl lysine isopeptide (Lys-Gly) (interchain with G-Cter in SUMO2); alternate cross-link involves residue lysine 779. Lysine 779 is covalently cross-linked (Glycyl lysine isopeptide (Lys-Gly) (interchain with G-Cter in ubiquitin); alternate). Residues lysine 784 and lysine 800 each participate in a glycyl lysine isopeptide (Lys-Gly) (interchain with G-Cter in ubiquitin) cross-link. A phosphoserine; by PKA mark is found at serine 849, serine 865, serine 877, and serine 907. Residues 863-882 (RSSGISPCFSSRRSSEASQA) are compositionally biased toward low complexity. Positions 863–918 (RSSGISPCFSSRRSSEASQAEGRPQNVSVADSYDPISTDASRRSSEASQSDGLPSL) are disordered. A compositionally biased stretch (polar residues) spans 908–918 (EASQSDGLPSL). Residues serine 980 and serine 1006 each carry the phosphoserine; by PKA modification. A disordered region spans residues 981 to 1042 (DGGAHGYGRR…PAMATSAEKR (62 aa)).

This sequence belongs to the GLI C2H2-type zinc-finger protein family. The full-length GLI3 form (GLI3FL) interacts with SUFU and this interaction regulates the formation of either repressor or activator forms of GLI3. Its association with SUFU is regulated by Hh signaling and dissociation of the SUFU-GLI3 interaction requires the presence of the ciliary motor KIF3A. Interacts with KIF7. The activator form of GLI3 (GLI3A) but not the repressor form (GLI3R) can interact with TRPS1. The phosphorylated form interacts with BTRC. Interacts with ZIC1. Interacts with ZIC3 (via C2H2-type domains 3, 4 and 5); the interaction enhances its transcriptional activity. Interacts with WRD11; the interaction associates EMX1 with GLI3. Interacts with DZIP1; retains GLI3 within the cytoplasm. Phosphorylated on multiple sites by protein kinase A (PKA) and phosphorylation by PKA primes further phosphorylation by CK1 and GSK3. Phosphorylated by DYRK2 (in vitro). Phosphorylation is essential for its proteolytic processing. Post-translationally, transcriptional repressor GLI3R, a C-terminally truncated form, is generated from the full-length GLI3 protein (GLI3FL/GLI3-190) through proteolytic processing. This process requires PKA-primed phosphorylation of GLI3, ubiquitination of GLI3 and the presence of BTRC. GLI3FL is complexed with SUFU in the cytoplasm and is maintained in a neutral state. Without the Hh signal, the SUFU-GLI3 complex is recruited to cilia, leading to the efficient processing of GLI3FL into GLI3R. GLI3R formation leads to its dissociation from SUFU, allowing it to translocate into the nucleus, and repress Hh target genes. When Hh signaling is initiated, SUFU dissociates from GLI3FL and this has two consequences. First, GLI3R production is halted. Second, free GLI3FL translocates to the nucleus, where it is phosphorylated, destabilized, and converted to a transcriptional activator (GLI3A). Phosphorylated in vitro by ULK3. In terms of tissue distribution, is expressed in a wide variety of normal adult tissues, including lung, colon, spleen, placenta, testis, and myometrium.

It localises to the nucleus. The protein localises to the cytoplasm. It is found in the cell projection. The protein resides in the cilium. Functionally, has a dual function as a transcriptional activator and a repressor of the sonic hedgehog (Shh) pathway, and plays a role in limb development. The full-length GLI3 form (GLI3FL) after phosphorylation and nuclear translocation, acts as an activator (GLI3A) while GLI3R, its C-terminally truncated form, acts as a repressor. A proper balance between the GLI3 activator and the repressor GLI3R, rather than the repressor gradient itself or the activator/repressor ratio gradient, specifies limb digit number and identity. In concert with TRPS1, plays a role in regulating the size of the zone of distal chondrocytes, in restricting the zone of PTHLH expression in distal cells and in activating chondrocyte proliferation. Binds to the minimal GLI-consensus sequence 5'-GGGTGGTC-3'. The protein is Transcriptional activator GLI3 (GLI3) of Homo sapiens (Human).